We begin with the raw amino-acid sequence, 209 residues long: Guanylyl cyclase-activating protein 3 (209 aa).

Glycine 2 carries N-myristoyl glycine lipidation. Position 3 is a deamidated asparagine (asparagine 3). 4 consecutive EF-hand domains span residues 15–50 (PTQE…QGLN), 52–87 (KANK…IMQE), 88–123 (KMEQ…VQAL), and 130–165 (SPEE…DQDL). Aspartate 65, asparagine 67, aspartate 69, glutamate 76, aspartate 101, aspartate 103, asparagine 105, serine 107, glutamate 112, aspartate 143, asparagine 145, aspartate 147, glutamate 149, and glutamate 154 together coordinate Ca(2+). Positions 187 to 209 (QPDMETDSSKSPDKAGLGKVKMK) are disordered.

As to expression, retina.

In terms of biological role, stimulates guanylyl cyclase 1 (GC1) and GC2 when free calcium ions concentration is low and inhibits guanylyl cyclases when free calcium ions concentration is elevated. This Ca(2+)-sensitive regulation of guanylyl cyclase (GC) is a key event in recovery of the dark state of rod photoreceptors following light exposure. The polypeptide is Guanylyl cyclase-activating protein 3 (GUCA1C) (Homo sapiens (Human)).